The primary structure comprises 794 residues: Zinc finger and BTB domain-containing protein 17 (794 aa).

The BTB domain occupies 1-104 (MDFPQHSQRV…VASFLQMQDI (104 aa)). The segment at 116–285 (EPSSTTGESA…QNLRSGTYGD (170 aa)) is disordered. The span at 132 to 142 (GGDKRAKDEKA) shows a compositional bias: basic and acidic residues. The span at 203-216 (SSMAAAEAEALSES) shows a compositional bias: low complexity. The span at 243–252 (VKEEGMHLDN) shows a compositional bias: basic and acidic residues. The span at 254-263 (EPPEENEESA) shows a compositional bias: acidic residues. The interval 260–299 (EESAGTDSGQELGMEGQNLRSGTYGDRTESKAYGSIIHKC) is interaction with MYC. C2H2-type zinc fingers lie at residues 297–319 (HKCE…IRIH), 325–347 (FSCR…EKTH), 353–375 (YGCE…KKRH), 381–403 (YRCG…QLVH), 409–431 (YQCD…LETH), 437–459 (HKCP…LKIH), 465–487 (LKCR…LRIH), 493–515 (YVCT…VRIH), 519–543 (KPCQ…VRQH), 549–571 (YVCE…IRHH), 577–599 (HKCS…IIIH), 605–628 (YLCD…KTVH), and 708–730 (YACD…VRIH). A Glycyl lysine isopeptide (Lys-Gly) (interchain with G-Cter in ubiquitin) cross-link involves residue lysine 388. Lysine 472 participates in a covalent cross-link: Glycyl lysine isopeptide (Lys-Gly) (interchain with G-Cter in ubiquitin). Residues 628–709 (HQGKAGIKIL…EDPNTHILYA (82 aa)) form an interaction with MYC region. Residues 628–794 (HQGKAGIKIL…TAPDCLPPAE (167 aa)) are interaction with HCFC1. A disordered region spans residues 769–794 (PRDGTEGQPTLAESPPTAPDCLPPAE). Pro residues predominate over residues 784–794 (PTAPDCLPPAE).

This sequence belongs to the krueppel C2H2-type zinc-finger protein family. As to quaternary structure, homooligomerizes (via the BTB/POZ domain), multimerization is required for DNA binding. Binds to the C-terminal helix-loop-helix motif of MYC which inhibits ZBTB17 transactivation and growth arrest activities and renders it insoluble in the nucleus. Also interacts with HCFC1, MAGEA4 and TMPRSS11A. Interacts (via the C-terminal zinc fingers) with GFI1; the interaction results in the recruitment of MYC to the CDKN1A/p21 and CDKN1B promoters and repression of transcription. Interacts with TRAF2, interfering with the binding of UBC13 to TRAF2, and inhibiting TRAF2 E3 ligase activity. Interacts with BCL6; the interaction inhibits ZBTB17 transactivation activity on target genes involved in cell cycle arrest. Interacts with ZBTB49; this interaction blocks ZBTB17-mediated repression of RB1. Post-translationally, undergoes 'Lys-48'-linked polyubiquitination at Lys-388 and Lys-472 and subsequent proteasomal degradation in a TRAF2-dependent manner and upon TNFA stimulation. In terms of tissue distribution, found in all the embryonic and adult tissues examined.

The protein localises to the nucleus. Functionally, transcription factor that can function as an activator or repressor depending on its binding partners, and by targeting negative regulators of cell cycle progression. Has been shown to bind to the promoters of adenovirus major late protein and cyclin D1 and activate transcription. Required for early embryonic development during gastrulation. Plays a critical role in early lymphocyte development, where it is essential to prevent apoptosis in lymphoid precursors, allowing them to survive in response to IL7 and undergo proper lineage commitment. Represses RB1 transcription; this repression can be blocked by interaction with ZBTB49. This is Zinc finger and BTB domain-containing protein 17 (Zbtb17) from Mus musculus (Mouse).